Here is a 564-residue protein sequence, read N- to C-terminus: Benomyl/methotrexate resistance protein (564 aa).

Positions 60-101 are disordered; the sequence is IDNQGEPNSSQSSSSNNTIVDNNNNNNNDVDGDKIVVTWDGD. Over residues 67 to 88 the composition is skewed to low complexity; that stretch reads NSSQSSSSNNTIVDNNNNNNND. 12 helical membrane passes run 116–136, 153–173, 184–204, 210–229, 241–262, 274–294, 358–374, 393–411, 431–451, 457–476, 489–506, and 530–551; these read AFFI…SAVY, VATL…LVFS, TSIY…TALV, LCIL…ATGG, LPVG…GPFF, WTFW…CFTL, IYIA…FEVF, YMSI…IPVI, IPIA…FGWS, HWVG…FLIF, PHYI…RSVI, and WGSS…LFYL.

Belongs to the major facilitator superfamily. CAR1 family.

Its subcellular location is the membrane. Functionally, probable transporter. Confers resistance to benomyl and methotrexate. The chain is Benomyl/methotrexate resistance protein (MDR1) from Candida albicans (Yeast).